Here is a 457-residue protein sequence, read N- to C-terminus: tRNA (guanine(37)-N(1))-methyltransferase (457 aa).

S-adenosyl-L-methionine contacts are provided by residues histidine 225, 263 to 264 (DL), 291 to 292 (DG), and asparagine 358.

It belongs to the class I-like SAM-binding methyltransferase superfamily. TRM5/TYW2 family. In terms of assembly, monomer.

It is found in the mitochondrion matrix. The protein localises to the nucleus. It localises to the cytoplasm. It carries out the reaction guanosine(37) in tRNA + S-adenosyl-L-methionine = N(1)-methylguanosine(37) in tRNA + S-adenosyl-L-homocysteine + H(+). Functionally, specifically methylates the N1 position of guanosine-37 in various cytoplasmic and mitochondrial tRNAs. Methylation is not dependent on the nature of the nucleoside 5' of the target nucleoside. This is the first step in the biosynthesis of wybutosine (yW), a modified base adjacent to the anticodon of tRNAs and required for accurate decoding. The chain is tRNA (guanine(37)-N(1))-methyltransferase from Coprinopsis cinerea (strain Okayama-7 / 130 / ATCC MYA-4618 / FGSC 9003) (Inky cap fungus).